A 275-amino-acid polypeptide reads, in one-letter code: Calcyphosin (275 aa).

Positions 59–87 (PGTTQLTQGPAGRTLGQTQASCPEPRPSM) are disordered. EF-hand domains are found at residues 107–142 (SGIQGLARFFRQLDRDGSRSLDADEFRQGLAKLGLV), 143–178 (LDQAEAEGVCRKWDRNGSGTLDLEEFLRALRPPMSQ), 179–214 (AREAVIAAAFAKLDRSGDGVVTVDDLRGVYSGRAHP), and 222–258 (TEDEVLRRFLDNFDSSEKDGQVTLAEFQDYYSGVSAS). Positions 120, 122, 124, 126, 131, 156, 158, 160, 162, 167, 192, 194, 196, and 203 each coordinate Ca(2+). Ser126 bears the Phosphoserine; by PKA mark.

Monomer. Does not form oligomers in the presence of calcium.

It localises to the cytoplasm. Its function is as follows. Calcium-binding protein. May play a role in cellular signaling events (Potential). The chain is Calcyphosin from Homo sapiens (Human).